Here is a 302-residue protein sequence, read N- to C-terminus: Pyridoxal 5'-phosphate synthase subunit PdxS (302 aa).

A D-ribose 5-phosphate-binding site is contributed by aspartate 32. The active-site Schiff-base intermediate with D-ribose 5-phosphate is the lysine 89. Glycine 161 provides a ligand contact to D-ribose 5-phosphate. D-glyceraldehyde 3-phosphate is bound at residue arginine 173. Residues glycine 222 and 243–244 (GS) contribute to the D-ribose 5-phosphate site. Positions 276–302 (ASNIGEGMQGDPNADLPEDERMQDRGN) are disordered.

Belongs to the PdxS/SNZ family. As to quaternary structure, in the presence of PdxT, forms a dodecamer of heterodimers.

The catalysed reaction is aldehydo-D-ribose 5-phosphate + D-glyceraldehyde 3-phosphate + L-glutamine = pyridoxal 5'-phosphate + L-glutamate + phosphate + 3 H2O + H(+). The protein operates within cofactor biosynthesis; pyridoxal 5'-phosphate biosynthesis. Functionally, catalyzes the formation of pyridoxal 5'-phosphate from ribose 5-phosphate (RBP), glyceraldehyde 3-phosphate (G3P) and ammonia. The ammonia is provided by the PdxT subunit. Can also use ribulose 5-phosphate and dihydroxyacetone phosphate as substrates, resulting from enzyme-catalyzed isomerization of RBP and G3P, respectively. The polypeptide is Pyridoxal 5'-phosphate synthase subunit PdxS (Halobacterium salinarum (strain ATCC 29341 / DSM 671 / R1)).